Consider the following 304-residue polypeptide: 17-beta-hydroxysteroid dehydrogenase 13 (304 aa).

An N-terminal signal peptide occupies residues 1–19 (MNLILEFLLLVGVIIYSYL). Phosphoserine is present on serine 33. Position 40–67 (40–67 (LITGAGHGIGRLTAYEFAKQKSRLVLWD)) interacts with NAD(+). At lysine 79 the chain carries N6-acetyllysine. Serine 172 provides a ligand contact to substrate. Residue tyrosine 185 is the Proton acceptor of the active site. Residue lysine 189 coordinates NAD(+). The tract at residues 276-304 (SSKHPHGGSQQPVTPIPGDLTPSSDFLKH) is disordered.

This sequence belongs to the short-chain dehydrogenases/reductases (SDR) family. As to expression, expressed predominantly in the liver (at protein level).

It is found in the lipid droplet. The protein resides in the endoplasmic reticulum. The catalysed reaction is 17beta-estradiol + NAD(+) = estrone + NADH + H(+). It catalyses the reaction all-trans-retinol + NAD(+) = all-trans-retinal + NADH + H(+). It carries out the reaction all-trans-retinal + NAD(+) + H2O = all-trans-retinoate + NADH + 2 H(+). Plays a pivotal role in hepatic lipid metabolism. In vitro, it catalyzes the oxidation of a variety of lipid substrates, including 17beta-estradiol, retinol, retinal, and leukotriene B4. The protein is 17-beta-hydroxysteroid dehydrogenase 13 (Hsd17b13) of Mus musculus (Mouse).